Here is a 625-residue protein sequence, read N- to C-terminus: MADQRMDISSTISDFMSPGPTDLLSSSLGTSGVDCNRKRKGSSTDYQESMDTDKDDPHGRLEYTEHQGRIKNAREAHSQIEKRRRDKMNSFIDELASLVPTCNAMSRKLDKLTVLRMAVQHMKTLRGATNPYTEANYKPTFLSDDELKHLILRAADGFLFVVGCDRGKILFVSESAFKILNYSQNDLIGQSLFDYLHPKDIAKVKEQLSSSDTAPRERLIDAKTGLPVKTDITPGPSRLCSGARRSFFCRMKCNRPSVKVEDKDFPSTCSKKKDRKSFCTIHSTGYLKSWPPTKMGLDEDNEPDNEGCNLSCLVAIGRLHSHVVPQPVNGEIRVKSMEYVSRHAIDGKFVFVDQRATAILAYLPQELLGTSCYEYFHQDDIGHLAECHRQVLQTREKITTNCYKFKIKDGSFITLRSRWFSFMNPWTKEVEYIVSTNTVVLANVLEGGDPTFPQLTASPRSMDSMLPSGEGGPKRTHPTVPGIPGGTRAGAGKIGRMIAEEIMEIHRIRGSSPSSCGSSPLNITSTPPPDASSPGGKKILNGGTPDIPSSGLLSGQAQENPGYPYSDSSSILGENPHIGIDMIDNDQGSSSPSNDEAAMAVIMSLLEADAGLGGPVDFSDLPWPL.

The segment at 1–60 is disordered; that stretch reads MADQRMDISSTISDFMSPGPTDLLSSSLGTSGVDCNRKRKGSSTDYQESMDTDKDDPHGR. Position 17 is a phosphoserine; by GSK3-beta (S17). Low complexity predominate over residues 17–32; sequence SPGPTDLLSSSLGTSG. T21 carries the post-translational modification Phosphothreonine; by GSK3-beta. Positions 36–41 match the Nuclear localization signal motif; it reads NRKRKG. Basic and acidic residues predominate over residues 51-60; that stretch reads DTDKDDPHGR. Residues 72 to 125 form the bHLH domain; that stretch reads NAREAHSQIEKRRRDKMNSFIDELASLVPTCNAMSRKLDKLTVLRMAVQHMKTL. S78 is modified (phosphoserine). S90 is subject to Phosphoserine; by CK2. The short motif at 142 to 152 is the Nuclear export signal 1 element; that stretch reads LSDDELKHLIL. Positions 143 to 215 constitute a PAS 1 domain; it reads SDDELKHLIL…EQLSSSDTAP (73 aa). Residue K252 forms a Glycyl lysine isopeptide (Lys-Gly) (interchain with G-Cter in SUMO2 and SUMO3) linkage. Residue K259 forms a Glycyl lysine isopeptide (Lys-Gly) (interchain with G-Cter in SUMO); alternate linkage. K259 participates in a covalent cross-link: Glycyl lysine isopeptide (Lys-Gly) (interchain with G-Cter in SUMO2); alternate. The 71-residue stretch at 325–395 folds into the PAS 2 domain; that stretch reads PQPVNGEIRV…ECHRQVLQTR (71 aa). Positions 360–368 match the Nuclear export signal 2 motif; sequence LAYLPQELL. In terms of domain architecture, PAC spans 400-443; the sequence is TNCYKFKIKDGSFITLRSRWFSFMNPWTKEVEYIVSTNTVVLAN. Disordered regions lie at residues 454–491 and 510–594; these read QLTA…RAGA and GSSP…SPSN. Positions 507 to 587 are interaction with CIART; the sequence is RIRGSSPSSC…IGIDMIDNDQ (81 aa). Positions 510 to 520 are enriched in low complexity; it reads GSSPSSCGSSP. K537 carries the N6-acetyllysine modification.

In terms of assembly, component of the circadian clock oscillator which includes the CRY1/2 proteins, CLOCK or NPAS2, BMAL1 or BMAL2, CSNK1D and/or CSNK1E, TIMELESS and the PER1/2/3 proteins. Forms a heterodimer with CLOCK. The CLOCK-BMAL1 heterodimer is required for E-box-dependent transactivation, for CLOCK nuclear translocation and degradation, and, for phosphorylation of both CLOCK and BMAL1. Part of a nuclear complex which also includes RACK1 and PRKCA; RACK1 and PRKCA are recruited to the complex in a circadian manner. Interacts with NPAS2. Interacts with EZH2. Interacts with SUMO3. Interacts with SIRT1. Interacts with AHR. Interacts with ID1, ID2 and ID3. Interacts with DDX4. Interacts with OGT. Interacts with EED and SUZ12. Interacts with MTA1. Interacts with CIART. Interacts with HSP90. Interacts with KAT2B and EP300. Interacts with BHLHE40/DEC1 and BHLHE41/DEC2. Interacts with RELB and the interaction is enhanced in the presence of CLOCK. Interacts with PER1, PER2, CRY1 and CRY2 and this interaction requires a translocation to the nucleus. Interaction of the CLOCK-BMAL1 heterodimer with PER or CRY inhibits transcription activation. Interaction of the CLOCK-BMAL1 with CRY1 is independent of DNA but with PER2 is off DNA. The CLOCK-BMAL1 heterodimer interacts with GSK3B. Interacts with KDM5A. Interacts with KMT2A; in a circadian manner. Interacts with UBE3A. Interacts with PRKCG. Interacts with MAGEL2. Interacts with NCOA2. Interacts with THRAP3. The CLOCK-BMAL1 heterodimer interacts with PASD1. Interacts with PASD1. Interacts with USP9X. Interacts with PIWIL2 (via PIWI domain). Interacts with HDAC3. Interacts with HNF4A. Ubiquitinated, leading to its proteasomal degradation. Deubiquitinated by USP9X. In terms of processing, O-glycosylated; contains O-GlcNAc. O-glycosylation by OGT prevents protein degradation by inhibiting ubiquitination. It also stabilizes the CLOCK-BMAL1 heterodimer thereby increasing CLOCK-BMAL1-mediated transcription of genes in the negative loop of the circadian clock such as PER1/2/3 and CRY1/2. Post-translationally, acetylated on Lys-537 by CLOCK during the repression phase of the circadian cycle. Acetylation facilitates recruitment of CRY1 protein and initiates the repression phase of the circadian cycle. Acetylated at Lys-537 by KAT5 during the activation phase of the cycle, leading to recruitment of the positive transcription elongation factor b (P-TEFb) and BRD4, followed by productive elongation of circadian transcripts. Deacetylated by SIRT1, which may result in decreased protein stability. Phosphorylated upon dimerization with CLOCK. Phosphorylation enhances the transcriptional activity, alters the subcellular localization and decreases the stability of the CLOCK-BMAL1 heterodimer by promoting its degradation. Phosphorylation shows circadian variations in the liver with a peak between CT10 to CT14. Phosphorylation at Ser-90 by CK2 is essential for its nuclear localization, its interaction with CLOCK and controls CLOCK nuclear entry. Dephosphorylation at Ser-78 is important for dimerization with CLOCK and transcriptional activity. In terms of processing, sumoylated on Lys-259 upon dimerization with CLOCK. Predominantly conjugated to poly-SUMO2/3 rather than SUMO1 and the level of these conjugates undergo rhythmic variation, peaking at CT9-CT12. Sumoylation localizes it exclusively to the PML body and promotes its ubiquitination in the PML body, ubiquitin-dependent proteasomal degradation and the transcriptional activity of the CLOCK-BMAL1 heterodimer. Post-translationally, undergoes lysosome-mediated degradation in a time-dependent manner in the liver.

Its subcellular location is the nucleus. It localises to the cytoplasm. The protein resides in the PML body. In terms of biological role, transcriptional activator which forms a core component of the circadian clock. The circadian clock, an internal time-keeping system, regulates various physiological processes through the generation of approximately 24 hour circadian rhythms in gene expression, which are translated into rhythms in metabolism and behavior. It is derived from the Latin roots 'circa' (about) and 'diem' (day) and acts as an important regulator of a wide array of physiological functions including metabolism, sleep, body temperature, blood pressure, endocrine, immune, cardiovascular, and renal function. Consists of two major components: the central clock, residing in the suprachiasmatic nucleus (SCN) of the brain, and the peripheral clocks that are present in nearly every tissue and organ system. Both the central and peripheral clocks can be reset by environmental cues, also known as Zeitgebers (German for 'timegivers'). The predominant Zeitgeber for the central clock is light, which is sensed by retina and signals directly to the SCN. The central clock entrains the peripheral clocks through neuronal and hormonal signals, body temperature and feeding-related cues, aligning all clocks with the external light/dark cycle. Circadian rhythms allow an organism to achieve temporal homeostasis with its environment at the molecular level by regulating gene expression to create a peak of protein expression once every 24 hours to control when a particular physiological process is most active with respect to the solar day. Transcription and translation of core clock components (CLOCK, NPAS2, BMAL1, BMAL2, PER1, PER2, PER3, CRY1 and CRY2) plays a critical role in rhythm generation, whereas delays imposed by post-translational modifications (PTMs) are important for determining the period (tau) of the rhythms (tau refers to the period of a rhythm and is the length, in time, of one complete cycle). A diurnal rhythm is synchronized with the day/night cycle, while the ultradian and infradian rhythms have a period shorter and longer than 24 hours, respectively. Disruptions in the circadian rhythms contribute to the pathology of cardiovascular diseases, cancer, metabolic syndromes and aging. A transcription/translation feedback loop (TTFL) forms the core of the molecular circadian clock mechanism. Transcription factors, CLOCK or NPAS2 and BMAL1 or BMAL2, form the positive limb of the feedback loop, act in the form of a heterodimer and activate the transcription of core clock genes and clock-controlled genes (involved in key metabolic processes), harboring E-box elements (5'-CACGTG-3') within their promoters. The core clock genes: PER1/2/3 and CRY1/2 which are transcriptional repressors form the negative limb of the feedback loop and interact with the CLOCK|NPAS2-BMAL1|BMAL2 heterodimer inhibiting its activity and thereby negatively regulating their own expression. This heterodimer also activates nuclear receptors NR1D1/2 and RORA/B/G, which form a second feedback loop and which activate and repress BMAL1 transcription, respectively. BMAL1 positively regulates myogenesis and negatively regulates adipogenesis via the transcriptional control of the genes of the canonical Wnt signaling pathway. Plays a role in normal pancreatic beta-cell function; regulates glucose-stimulated insulin secretion via the regulation of antioxidant genes NFE2L2/NRF2 and its targets SESN2, PRDX3, CCLC and CCLM. Negatively regulates the mTORC1 signaling pathway; regulates the expression of MTOR and DEPTOR. Controls diurnal oscillations of Ly6C inflammatory monocytes; rhythmic recruitment of the PRC2 complex imparts diurnal variation to chemokine expression that is necessary to sustain Ly6C monocyte rhythms. Regulates the expression of HSD3B2, STAR, PTGS2, CYP11A1, CYP19A1 and LHCGR in the ovary and also the genes involved in hair growth. Plays an important role in adult hippocampal neurogenesis by regulating the timely entry of neural stem/progenitor cells (NSPCs) into the cell cycle and the number of cell divisions that take place prior to cell-cycle exit. Regulates the circadian expression of CIART and KLF11. The CLOCK-BMAL1 heterodimer regulates the circadian expression of SERPINE1/PAI1, VWF, B3, CCRN4L/NOC, NAMPT, DBP, MYOD1, PPARGC1A, PPARGC1B, SIRT1, GYS2, F7, NGFR, GNRHR, BHLHE40/DEC1, ATF4, MTA1, KLF10 and also genes implicated in glucose and lipid metabolism. Promotes rhythmic chromatin opening, regulating the DNA accessibility of other transcription factors. The NPAS2-BMAL1 heterodimer positively regulates the expression of MAOA, F7 and LDHA and modulates the circadian rhythm of daytime contrast sensitivity by regulating the rhythmic expression of adenylate cyclase type 1 (ADCY1) in the retina. The preferred binding motif for the CLOCK-BMAL1 heterodimer is 5'-CACGTGA-3', which contains a flanking adenine nucleotide at the 3-prime end of the canonical 6-nucleotide E-box sequence. CLOCK specifically binds to the half-site 5'-CAC-3', while BMAL1 binds to the half-site 5'-GTGA-3'. The CLOCK-BMAL1 heterodimer also recognizes the non-canonical E-box motifs 5'-AACGTGA-3' and 5'-CATGTGA-3'. Essential for the rhythmic interaction of CLOCK with ASS1 and plays a critical role in positively regulating CLOCK-mediated acetylation of ASS1. Plays a role in protecting against lethal sepsis by limiting the expression of immune checkpoint protein CD274 in macrophages in a PKM2-dependent manner. Regulates the diurnal rhythms of skeletal muscle metabolism via transcriptional activation of genes promoting triglyceride synthesis (DGAT2) and metabolic efficiency (COQ10B). In Pongo abelii (Sumatran orangutan), this protein is Basic helix-loop-helix ARNT-like protein 1 (BMAL1).